A 1498-amino-acid polypeptide reads, in one-letter code: Golgin subfamily A member 3 (1498 aa).

Met-1 carries the post-translational modification N-acetylmethionine. The segment at 1–118 (MDGASAEQDG…GTSAEGSVRK (118 aa)) is disordered. Residue Ser-18 is modified to Phosphoserine. The span at 27-36 (PLKPPGPLVP) shows a compositional bias: pro residues. At Ser-57 the chain carries Phosphoserine. Pro residues predominate over residues 71 to 81 (PTPPFPDPPSS). The tract at residues 121 to 141 (LQSLRLSLPMQETQLCSTDSP) is interaction with GOPC. Disordered regions lie at residues 166–195 (RVKR…MLNP) and 216–325 (SVPR…SAST). The tract at residues 172–257 (ERSSQPATKT…DYRTEDSNAG (86 aa)) is golgi-targeting domain. Polar residues-rich tracts occupy residues 173–184 (RSSQPATKTRLF) and 269–291 (TKGS…SLSP). Ser-272 carries the phosphoserine modification. Residues 315-324 (SDSSSYSSAS) are compositionally biased toward low complexity. A phosphoserine mark is found at Ser-385, Ser-389, and Ser-465. Residues 394–1459 (VSLESSAAET…ALTVHESLSS (1066 aa)) are a coiled coil. Over residues 789–801 (KEELDRGARRLEE) the composition is skewed to basic and acidic residues. Disordered stretches follow at residues 789–809 (KEEL…TSET), 974–993 (QKQK…KEMK), 1376–1400 (RGAA…PIKI), and 1440–1498 (DSLQ…GPGE). Position 983 is a phosphoserine (Ser-983). A compositionally biased stretch (basic and acidic residues) spans 1376–1387 (RGAAKTRKEPKG). Ser-1392 carries the phosphoserine modification. The segment covering 1440–1452 (DSLQRQMEEHALT) has biased composition (basic and acidic residues).

As to quaternary structure, homodimer. Interacts with GOLGA7. Isoform 1 interacts with GOPC while isoform 3 does not. Cleaved by caspases in apoptotic cells. As to expression, expressed in all tissues tested. Expressed in liver, testis, lung, heart, salivary gland and kidney.

Its subcellular location is the cytoplasm. The protein resides in the golgi apparatus. It localises to the golgi stack membrane. Golgi auto-antigen; probably involved in maintaining Golgi structure. In Homo sapiens (Human), this protein is Golgin subfamily A member 3 (GOLGA3).